The chain runs to 256 residues: Carboxysome shell protein CsoS1D (256 aa).

The segment at 1–24 is disordered; the sequence is MEPTSSLNRGDRKKGSSLVTGSEV. 2 consecutive BMC circularly permuted domains span residues 55–157 and 158–256; these read ELRT…RTKP and STSW…ISNY. Positions 120 to 121 match the Gates the pore motif; that stretch reads ER.

The protein belongs to the EutL/PduB family. In terms of assembly, homotrimer. Forms a dimer of stacked trimers, the same faces interact. A CsoS1-CsoS1D-CsoS2 complex can be isolated following expression in E.coli.

Its subcellular location is the carboxysome. Part of the carboxysome shell, a polyhedral inclusion where RuBisCO (ribulose bisphosphate carboxylase, cbbL-cbbS) is sequestered. It may control transport of RuBisCO reactants in and out of the carboxysome. There are estimated to be 6 CsoS1D hexamers per carboxysome. The sequence is that of Carboxysome shell protein CsoS1D from Prochlorococcus marinus subsp. pastoris (strain CCMP1986 / NIES-2087 / MED4).